Reading from the N-terminus, the 750-residue chain is Serine/threonine-protein kinase PknG (750 aa).

A disordered region spans residues 1 to 66; that stretch reads MAKASETERS…PQDRMATTSR (66 aa). A compositionally biased stretch (polar residues) spans 17–34; it reads ADAQTATSATVRPLSTQA. Residues 151 to 396 enclose the Protein kinase domain; the sequence is YEVKGCIAHG…EMSAQLTGVL (246 aa). Residues 157 to 165 and Lys181 contribute to the ATP site; that span reads IAHGGLGWI. Asp276 functions as the Proton acceptor in the catalytic mechanism.

The protein belongs to the protein kinase superfamily. Ser/Thr protein kinase family. In terms of processing, autophosphorylated.

The enzyme catalyses L-seryl-[protein] + ATP = O-phospho-L-seryl-[protein] + ADP + H(+). The catalysed reaction is L-threonyl-[protein] + ATP = O-phospho-L-threonyl-[protein] + ADP + H(+). This Mycobacterium bovis (strain ATCC BAA-935 / AF2122/97) protein is Serine/threonine-protein kinase PknG (pknG).